We begin with the raw amino-acid sequence, 319 residues long: Molybdenum cofactor biosynthesis bifunctional protein (319 aa).

The tract at residues 1–145 (MIDVGDKAVT…GKSGHWQRPA (145 aa)) is molybdenum cofactor biosynthesis protein C. Substrate-binding positions include 61 to 63 (LCH) and 99 to 100 (ME). Asp114 is an active-site residue. The molybdenum cofactor biosynthesis protein B stretch occupies residues 146–319 (IAPDVAPTGA…KGADHGTVKG (174 aa)).

This sequence in the N-terminal section; belongs to the MoaC family. In the C-terminal section; belongs to the MoaB/Mog family.

It catalyses the reaction (8S)-3',8-cyclo-7,8-dihydroguanosine 5'-triphosphate = cyclic pyranopterin phosphate + diphosphate. It participates in cofactor biosynthesis; molybdopterin biosynthesis. Catalyzes the conversion of (8S)-3',8-cyclo-7,8-dihydroguanosine 5'-triphosphate to cyclic pyranopterin monophosphate (cPMP). This is Molybdenum cofactor biosynthesis bifunctional protein (moaCB) from Synechococcus elongatus (strain ATCC 33912 / PCC 7942 / FACHB-805) (Anacystis nidulans R2).